Here is a 309-residue protein sequence, read N- to C-terminus: Probable pyridoxal 5'-phosphate synthase subunit PDX1 (309 aa).

Asp-40 is a D-ribose 5-phosphate binding site. Lys-97 acts as the Schiff-base intermediate with D-ribose 5-phosphate in catalysis. Gly-169 contacts D-ribose 5-phosphate. Residue Arg-181 participates in D-glyceraldehyde 3-phosphate binding. D-ribose 5-phosphate contacts are provided by residues Gly-230 and 251–252 (GS).

The protein belongs to the PdxS/SNZ family.

It catalyses the reaction aldehydo-D-ribose 5-phosphate + D-glyceraldehyde 3-phosphate + L-glutamine = pyridoxal 5'-phosphate + L-glutamate + phosphate + 3 H2O + H(+). Its pathway is cofactor biosynthesis; pyridoxal 5'-phosphate biosynthesis. Its function is as follows. Catalyzes the formation of pyridoxal 5'-phosphate from ribose 5-phosphate (RBP), glyceraldehyde 3-phosphate (G3P) and ammonia. The ammonia is provided by PDX2. Can also use ribulose 5-phosphate and dihydroxyacetone phosphate as substrates, resulting from enzyme-catalyzed isomerization of RBP and G3P, respectively. Also plays an indirect role in resistance to singlet oxygen-generating photosensitizers. The polypeptide is Probable pyridoxal 5'-phosphate synthase subunit PDX1 (PDX1) (Ginkgo biloba (Ginkgo)).